The following is a 318-amino-acid chain: Homoserine kinase (318 aa).

An ATP-binding site is contributed by 97–107; sequence PIGSGLGSSAC.

This sequence belongs to the GHMP kinase family. Homoserine kinase subfamily.

The protein resides in the cytoplasm. It carries out the reaction L-homoserine + ATP = O-phospho-L-homoserine + ADP + H(+). Its pathway is amino-acid biosynthesis; L-threonine biosynthesis; L-threonine from L-aspartate: step 4/5. Catalyzes the ATP-dependent phosphorylation of L-homoserine to L-homoserine phosphate. This chain is Homoserine kinase, found in Vibrio parahaemolyticus serotype O3:K6 (strain RIMD 2210633).